Here is a 476-residue protein sequence, read N- to C-terminus: Bifunctional protein HldE (476 aa).

The tract at residues 1-318 is ribokinase; the sequence is MKPTLPNYDQ…AEAIHGSQDS (318 aa). 195–198 serves as a coordination point for ATP; that stretch reads NMLE. Aspartate 264 is a catalytic residue. The tract at residues 344–476 is cytidylyltransferase; sequence MTNGCFDILH…IIEAIKGGRG (133 aa).

It in the N-terminal section; belongs to the carbohydrate kinase PfkB family. This sequence in the C-terminal section; belongs to the cytidylyltransferase family. Homodimer.

It carries out the reaction D-glycero-beta-D-manno-heptose 7-phosphate + ATP = D-glycero-beta-D-manno-heptose 1,7-bisphosphate + ADP + H(+). It catalyses the reaction D-glycero-beta-D-manno-heptose 1-phosphate + ATP + H(+) = ADP-D-glycero-beta-D-manno-heptose + diphosphate. It participates in nucleotide-sugar biosynthesis; ADP-L-glycero-beta-D-manno-heptose biosynthesis; ADP-L-glycero-beta-D-manno-heptose from D-glycero-beta-D-manno-heptose 7-phosphate: step 1/4. Its pathway is nucleotide-sugar biosynthesis; ADP-L-glycero-beta-D-manno-heptose biosynthesis; ADP-L-glycero-beta-D-manno-heptose from D-glycero-beta-D-manno-heptose 7-phosphate: step 3/4. Catalyzes the phosphorylation of D-glycero-D-manno-heptose 7-phosphate at the C-1 position to selectively form D-glycero-beta-D-manno-heptose-1,7-bisphosphate. Functionally, catalyzes the ADP transfer from ATP to D-glycero-beta-D-manno-heptose 1-phosphate, yielding ADP-D-glycero-beta-D-manno-heptose. This is Bifunctional protein HldE from Aliivibrio salmonicida (strain LFI1238) (Vibrio salmonicida (strain LFI1238)).